The chain runs to 535 residues: T-complex protein 1 subunit beta (535 aa).

Residue alanine 2 is modified to N-acetylalanine. Serine 3 is subject to Phosphoserine. Lysine 13 bears the N6-acetyllysine mark. Glycine 44 contributes to the ADP binding site. Glycine 44 serves as a coordination point for ATP. Serine 60 bears the Phosphoserine mark. Aspartate 97 is a binding site for Mg(2+). ADP-binding residues include glycine 98, threonine 99, threonine 100, and serine 101. Residues glycine 98, threonine 99, and threonine 100 each coordinate ATP. Lysine 154 bears the N6-acetyllysine mark. The ADP site is built by serine 168 and serine 169. N6-acetyllysine is present on lysine 181. Lysine 248 is covalently cross-linked (Glycyl lysine isopeptide (Lys-Gly) (interchain with G-Cter in SUMO2)). At serine 260 the chain carries Phosphoserine. Phosphothreonine is present on threonine 261. ADP-binding residues include glycine 410, glutamate 495, and lysine 500. Residues glutamate 495 and lysine 500 each contribute to the ATP site.

Belongs to the TCP-1 chaperonin family. As to quaternary structure, component of the chaperonin-containing T-complex (TRiC), a hexadecamer composed of two identical back-to-back stacked rings enclosing a protein folding chamber. Each ring is made up of eight different subunits: TCP1/CCT1, CCT2, CCT3, CCT4, CCT5, CCT6A/CCT6, CCT7, CCT8. Interacts with PACRG. Interacts with FLCN. Interacts with DLEC1. Interacts with SVEP1.

Its subcellular location is the cytoplasm. The catalysed reaction is ATP + H2O = ADP + phosphate + H(+). Functionally, component of the chaperonin-containing T-complex (TRiC), a molecular chaperone complex that assists the folding of actin, tubulin and other proteins upon ATP hydrolysis. The TRiC complex mediates the folding of WRAP53/TCAB1, thereby regulating telomere maintenance. As part of the TRiC complex may play a role in the assembly of BBSome, a complex involved in ciliogenesis regulating transports vesicles to the cilia. In Rattus norvegicus (Rat), this protein is T-complex protein 1 subunit beta (Cct2).